We begin with the raw amino-acid sequence, 351 residues long: Holliday junction branch migration complex subunit RuvB (351 aa).

Residues 4-185 (HDRELVSPEA…FGFVAHMDFY (182 aa)) are large ATPase domain (RuvB-L). ATP-binding positions include leucine 24, arginine 25, glycine 66, lysine 69, threonine 70, threonine 71, 132–134 (EDF), arginine 175, tyrosine 185, and arginine 222. Threonine 70 contributes to the Mg(2+) binding site. Residues 186–256 (SPEELELILH…CARAALSLYE (71 aa)) are small ATPAse domain (RuvB-S). The interval 259-351 (DEGLDRLDRA…AALFDPDEEP (93 aa)) is head domain (RuvB-H). The DNA site is built by arginine 314 and arginine 319.

The protein belongs to the RuvB family. In terms of assembly, homohexamer. Forms an RuvA(8)-RuvB(12)-Holliday junction (HJ) complex. HJ DNA is sandwiched between 2 RuvA tetramers; dsDNA enters through RuvA and exits via RuvB. An RuvB hexamer assembles on each DNA strand where it exits the tetramer. Each RuvB hexamer is contacted by two RuvA subunits (via domain III) on 2 adjacent RuvB subunits; this complex drives branch migration. In the full resolvosome a probable DNA-RuvA(4)-RuvB(12)-RuvC(2) complex forms which resolves the HJ.

It is found in the cytoplasm. It carries out the reaction ATP + H2O = ADP + phosphate + H(+). Its function is as follows. The RuvA-RuvB-RuvC complex processes Holliday junction (HJ) DNA during genetic recombination and DNA repair, while the RuvA-RuvB complex plays an important role in the rescue of blocked DNA replication forks via replication fork reversal (RFR). RuvA specifically binds to HJ cruciform DNA, conferring on it an open structure. The RuvB hexamer acts as an ATP-dependent pump, pulling dsDNA into and through the RuvAB complex. RuvB forms 2 homohexamers on either side of HJ DNA bound by 1 or 2 RuvA tetramers; 4 subunits per hexamer contact DNA at a time. Coordinated motions by a converter formed by DNA-disengaged RuvB subunits stimulates ATP hydrolysis and nucleotide exchange. Immobilization of the converter enables RuvB to convert the ATP-contained energy into a lever motion, pulling 2 nucleotides of DNA out of the RuvA tetramer per ATP hydrolyzed, thus driving DNA branch migration. The RuvB motors rotate together with the DNA substrate, which together with the progressing nucleotide cycle form the mechanistic basis for DNA recombination by continuous HJ branch migration. Branch migration allows RuvC to scan DNA until it finds its consensus sequence, where it cleaves and resolves cruciform DNA. The chain is Holliday junction branch migration complex subunit RuvB from Thermobifida fusca (strain YX).